We begin with the raw amino-acid sequence, 130 residues long: Transcription antitermination protein NusB (130 aa).

The protein belongs to the NusB family.

Its function is as follows. Involved in transcription antitermination. Required for transcription of ribosomal RNA (rRNA) genes. Binds specifically to the boxA antiterminator sequence of the ribosomal RNA (rrn) operons. This is Transcription antitermination protein NusB from Bacillus cereus (strain ATCC 10987 / NRS 248).